Here is a 206-residue protein sequence, read N- to C-terminus: Large ribosomal subunit protein uL4 (206 aa).

Positions 46-78 are disordered; it reads GNRAQKDREQVKHTTKKPWRQKGTGRARAGMSS. The segment covering 58 to 70 has biased composition (basic residues); sequence HTTKKPWRQKGTG.

The protein belongs to the universal ribosomal protein uL4 family. As to quaternary structure, part of the 50S ribosomal subunit.

Its function is as follows. One of the primary rRNA binding proteins, this protein initially binds near the 5'-end of the 23S rRNA. It is important during the early stages of 50S assembly. It makes multiple contacts with different domains of the 23S rRNA in the assembled 50S subunit and ribosome. Functionally, forms part of the polypeptide exit tunnel. The polypeptide is Large ribosomal subunit protein uL4 (Burkholderia cenocepacia (strain ATCC BAA-245 / DSM 16553 / LMG 16656 / NCTC 13227 / J2315 / CF5610) (Burkholderia cepacia (strain J2315))).